The chain runs to 368 residues: Zinc finger protein 24 (368 aa).

A Glycyl lysine isopeptide (Lys-Gly) (interchain with G-Cter in SUMO2) cross-link involves residue K22. K27 participates in a covalent cross-link: Glycyl lysine isopeptide (Lys-Gly) (interchain with G-Cter in SUMO1); alternate. K27 participates in a covalent cross-link: Glycyl lysine isopeptide (Lys-Gly) (interchain with G-Cter in SUMO2); alternate. An SCAN box domain is found at 52–134 (RQRFRQFGYQ…TVLEDLESEL (83 aa)). S132 and S142 each carry phosphoserine. Residues K147, K177, and K236 each participate in a glycyl lysine isopeptide (Lys-Gly) (interchain with G-Cter in SUMO2) cross-link. The C2H2-type 1 zinc-finger motif lies at 251–273 (HICDECGKHFSQGSALILHQRIH). A necessary and sufficient for nuclear localization region spans residues 251 to 301 (HICDECGKHFSQGSALILHQRIHSGEKPYGCVECGKAFSRSSILVQHQRVH). At S274 the chain carries Phosphoserine. Residues K277 and K286 each participate in a glycyl lysine isopeptide (Lys-Gly) (interchain with G-Cter in SUMO2) cross-link. 3 consecutive C2H2-type zinc fingers follow at residues 279–301 (YGCV…QRVH), 307–329 (YKCL…QRIH), and 335–357 (YECV…QRRH). A Phosphoserine modification is found at S292. Y335 carries the post-translational modification Phosphotyrosine. Residues K361 and K367 each participate in a glycyl lysine isopeptide (Lys-Gly) (interchain with G-Cter in SUMO2) cross-link.

This sequence belongs to the krueppel C2H2-type zinc-finger protein family. In terms of processing, sumoylated. As to expression, expressed in many tissues except in heart.

Its subcellular location is the nucleus. Its function is as follows. Transcription factor required for myelination of differentiated oligodendrocytes. Required for the conversion of oligodendrocytes from the premyelinating to the myelinating state. In the developing central nervous system (CNS), involved in the maintenance in the progenitor stage by promoting the cell cycle. Specifically binds to the 5'-TCAT-3' DNA sequence. Has transcription repressor activity in vitro. The protein is Zinc finger protein 24 (ZNF24) of Homo sapiens (Human).